The chain runs to 313 residues: MGESMTWVQALVLGLVQGLTEFLPISSSAHLRIVSSVFFGEDAGASFTAVTQLGTEAAVLVYFAKDIWRILVAWTTTLWDKARAATGPRVPIHDRPTTRLPVLTADNEHRFAAEAQRELDYRIGWYVIIATIPIGVLGFLFKDEIRTGARNLWLVSFMLIAFALVIAAAEHYGAKRRPIEQLTTRDGLVMGFAQCLALIPGVSRSGATSSAGLFLGLEREAAVRFSFLLAIPAVTASGLFSLPDAFEPAGEGLNASGPQLLVATIVSFVVGYASVAWLLKFVARHSLNWFVGYRIVLGLVIMGLLGAGVISAT.

6 consecutive transmembrane segments (helical) span residues 121–141 (YRIG…GFLF), 152–172 (LWLV…AEHY), 187–207 (GLVM…RSGA), 225–245 (FSFL…LPDA), 259–279 (QLLV…AWLL), and 290–310 (FVGY…AGVI).

Belongs to the UppP family.

Its subcellular location is the cell membrane. It carries out the reaction di-trans,octa-cis-undecaprenyl diphosphate + H2O = di-trans,octa-cis-undecaprenyl phosphate + phosphate + H(+). Catalyzes the dephosphorylation of undecaprenyl diphosphate (UPP). Confers resistance to bacitracin. This chain is Undecaprenyl-diphosphatase, found in Nocardia farcinica (strain IFM 10152).